The primary structure comprises 506 residues: Maturase K (506 aa).

It belongs to the intron maturase 2 family. MatK subfamily.

It is found in the plastid. It localises to the chloroplast. Its function is as follows. Usually encoded in the trnK tRNA gene intron. Probably assists in splicing its own and other chloroplast group II introns. The chain is Maturase K from Lactuca sativa (Garden lettuce).